Consider the following 739-residue polypeptide: Elongation factor 2 (739 aa).

The 243-residue stretch at 19-261 folds into the tr-type G domain; it reads RNIRNIGIIA…MVALHVPDPI (243 aa). GTP is bound by residues 28 to 35, 94 to 98, and 148 to 151; these read AHVDHGKT, DTPGH, and NKID. H603 carries the diphthamide modification.

It belongs to the TRAFAC class translation factor GTPase superfamily. Classic translation factor GTPase family. EF-G/EF-2 subfamily.

The protein localises to the cytoplasm. In terms of biological role, catalyzes the GTP-dependent ribosomal translocation step during translation elongation. During this step, the ribosome changes from the pre-translocational (PRE) to the post-translocational (POST) state as the newly formed A-site-bound peptidyl-tRNA and P-site-bound deacylated tRNA move to the P and E sites, respectively. Catalyzes the coordinated movement of the two tRNA molecules, the mRNA and conformational changes in the ribosome. In Korarchaeum cryptofilum (strain OPF8), this protein is Elongation factor 2.